A 99-amino-acid polypeptide reads, in one-letter code: NADH-quinone oxidoreductase subunit K (99 aa).

Transmembrane regions (helical) follow at residues 3–23 (PTYYLLLSALLFSIGAVGVLV), 28–48 (IVVFMCVELMLNAVNLTLVTF), and 59–79 (VMAFFVMVVAAAEVVVGLAII).

The protein belongs to the complex I subunit 4L family. NDH-1 is composed of 14 different subunits. Subunits NuoA, H, J, K, L, M, N constitute the membrane sector of the complex.

It is found in the cell membrane. It carries out the reaction a quinone + NADH + 5 H(+)(in) = a quinol + NAD(+) + 4 H(+)(out). NDH-1 shuttles electrons from NADH, via FMN and iron-sulfur (Fe-S) centers, to quinones in the respiratory chain. The immediate electron acceptor for the enzyme in this species is believed to be a menaquinone. Couples the redox reaction to proton translocation (for every two electrons transferred, four hydrogen ions are translocated across the cytoplasmic membrane), and thus conserves the redox energy in a proton gradient. This Saccharopolyspora erythraea (strain ATCC 11635 / DSM 40517 / JCM 4748 / NBRC 13426 / NCIMB 8594 / NRRL 2338) protein is NADH-quinone oxidoreductase subunit K.